The primary structure comprises 382 residues: Fimbrial usher domain-containing protein YdeT (382 aa).

The protein is Fimbrial usher domain-containing protein YdeT (ydeT) of Escherichia coli (strain K12).